A 151-amino-acid polypeptide reads, in one-letter code: Probable cGMP 3',5'-cyclic phosphodiesterase subunit delta (151 aa).

The protein belongs to the PDE6D/unc-119 family. As to quaternary structure, interacts with Pde6.

It is found in the nucleus. The protein localises to the cytoplasm. The protein is Probable cGMP 3',5'-cyclic phosphodiesterase subunit delta of Drosophila willistoni (Fruit fly).